We begin with the raw amino-acid sequence, 524 residues long: Homeobox protein engrailed-like SMOX-2 (524 aa).

The tract at residues 194–218 (SSSSSSSSSSSSSSSSSSCSTNSSS) is disordered. A DNA-binding region (homeobox) is located at residues 423-482 (LKRPRTSFTVPQLKRLSQEFEKNRYLDELRRKKLATELDLRESQVKIWFQNKRAKTKKAS).

This sequence belongs to the engrailed homeobox family.

Its subcellular location is the nucleus. The sequence is that of Homeobox protein engrailed-like SMOX-2 (SMOX-2) from Schistosoma mansoni (Blood fluke).